A 1351-amino-acid chain; its full sequence is Serine-rich adhesin for platelets (1351 aa).

An N-terminal signal peptide occupies residues 1–89 (MSKRQKEFHD…VNMLHDQQAF (89 aa)). The tract at residues 90–230 (AASDAPLTSE…KTSTTSTSTA (141 aa)) is serine-rich repeat region 1, SRR1. Over residues 100 to 111 (LNTQSETVGNQN) the composition is skewed to polar residues. Disordered regions lie at residues 100 to 228 (LNTQ…TSTS) and 751 to 1323 (NSMS…GLLG). Low complexity-rich tracts occupy residues 112–133 (STTI…NSSS) and 149–228 (NVTS…TSTS). The segment at 231 to 751 (PIKLRTFSRL…TTFKYEVTRN (521 aa)) is non-repeat region (NRR). Positions 752–1294 (SMSDSVSTSG…SQSTLSATSE (543 aa)) are enriched in low complexity. The serine-rich repeat region 1, SRR1 stretch occupies residues 752 to 1312 (SMSDSVSTSG…AQSEKRLPDT (561 aa)). The LPXTG sorting signal motif lies at 1309–1313 (LPDTG). At Thr1312 the chain carries Pentaglycyl murein peptidoglycan amidated threonine. A propeptide spans 1313–1351 (GDSIKQNGLLGGVMTLLVGLGLMKRKKKKDENDQDDSQA) (removed by sortase).

This sequence belongs to the serine-rich repeat protein (SRRP) family. Post-translationally, proteolytically cleaved by a metalloprotease. In terms of processing, glycosylated. It is probable that most of the Ser residues in SSR1 and SSR2 are O-GlcNAcylated. Sequential glycosylation by sugar transferases are able to generate complex sugar polymorphisms.

It localises to the secreted. The protein resides in the cell wall. Its function is as follows. Mediates binding to human platelets, possibly through a receptor-ligand interaction. Probably associated with virulence in endovascular infection. The chain is Serine-rich adhesin for platelets (sasA) from Staphylococcus aureus (strain MRSA252).